A 133-amino-acid polypeptide reads, in one-letter code: MPVTDSIADFITRIRNAGSAKNKTTDIPYTRVRENLSKLLVEKGYIQNYTVIKTEADKFPFIRVELKYTADGRHAIKEISRVSSPGRRVYQGKDIKRYLGGLGLFILSTSKGILTDKEAREQNVGGEVLFRIY.

It belongs to the universal ribosomal protein uS8 family. As to quaternary structure, part of the 30S ribosomal subunit. Contacts proteins S5 and S12.

Its function is as follows. One of the primary rRNA binding proteins, it binds directly to 16S rRNA central domain where it helps coordinate assembly of the platform of the 30S subunit. This chain is Small ribosomal subunit protein uS8, found in Chlorobaculum parvum (strain DSM 263 / NCIMB 8327) (Chlorobium vibrioforme subsp. thiosulfatophilum).